Consider the following 118-residue polypeptide: Beta-2-microglobulin (118 aa).

The first 21 residues, 1–21, serve as a signal peptide directing secretion; that stretch reads MESRWGIVVIGLLCCVSWVEA. Residues 26–113 form the Ig-like C1-type domain; it reads PKIQVYTRSP…THNSVTKSVK (88 aa). Cys46 and Cys101 are disulfide-bonded.

It belongs to the beta-2-microglobulin family. In terms of assembly, heterodimer of an alpha chain and a beta chain. Beta-2-microglobulin is the beta-chain of major histocompatibility complex class I molecules.

It localises to the secreted. Functionally, component of the class I major histocompatibility complex (MHC). Involved in the presentation of peptide antigens to the immune system. The sequence is that of Beta-2-microglobulin (B2M) from Tachyglossus aculeatus aculeatus (Southeast Australian short-beaked echidna).